The following is a 236-amino-acid chain: Exotoxin type H (236 aa).

A signal peptide spans 1–32; it reads MRYNCRYSHIDKKIYSMIICLSFLLYSNVVQA.

The protein belongs to the staphylococcal/streptococcal toxin family.

The protein localises to the secreted. Mitogenic for human peripheral blood lymphocytes. This Streptococcus pyogenes serotype M1 protein is Exotoxin type H (speH).